The primary structure comprises 229 residues: Acetylcholine-binding protein (229 aa).

The first 19 residues, 1 to 19, serve as a signal peptide directing secretion; it reads MRRNIFCLACLWIVQACLS. N-linked (GlcNAc...) asparagine glycosylation occurs at N85. The Ig-like domain occupies 114–217; that stretch reads PEVLTPQLAR…PEAYEDVEVS (104 aa). A disulfide bond links C142 and C155.

As to quaternary structure, homopentamer. In terms of processing, N-glycosylated. In terms of tissue distribution, expressed by glial cells.

Its subcellular location is the synaptic cleft. Binds to acetylcholine. Modulates neuronal synaptic transmission. This chain is Acetylcholine-binding protein, found in Lymnaea stagnalis (Great pond snail).